The chain runs to 367 residues: Putative transport protein MT0215 (367 aa).

9 helical membrane-spanning segments follow: residues 18–38, 41–61, 74–94, 161–181, 228–248, 249–269, 270–290, 314–334, and 337–357; these read AAWAWRFLVILAAMVALLWVL, FEVIVVPVLLALMLSALLVPP, VAVTLVLLSGFAVLGGILTFV, ITELVTAAVLVLFTLIFFLYG, AGVGAGLAVMGVPLALPLASL, VFFGAFIPLIGAVVAGFLAVV, VALLAKGIGYALITVGLLIAV, VVLAIAAGGVLAGVVGALLAV, and VAFFNNAVQVLLGGNPFADVA.

Belongs to the autoinducer-2 exporter (AI-2E) (TC 2.A.86) family.

It localises to the cell membrane. The sequence is that of Putative transport protein MT0215 from Mycobacterium tuberculosis (strain CDC 1551 / Oshkosh).